We begin with the raw amino-acid sequence, 573 residues long: Membrane protein insertase YidC (573 aa).

A run of 6 helical transmembrane segments spans residues 6–26 (VFLI…WGKD), 355–375 (FSIM…LHSF), 379–399 (WGWA…PLSA), 446–466 (GGCL…WVLV), 488–508 (PYFI…KLTP), and 524–544 (PLVF…YWVV).

It belongs to the OXA1/ALB3/YidC family. Type 1 subfamily. As to quaternary structure, interacts with the Sec translocase complex via SecD. Specifically interacts with transmembrane segments of nascent integral membrane proteins during membrane integration.

The protein localises to the cell inner membrane. In terms of biological role, required for the insertion and/or proper folding and/or complex formation of integral membrane proteins into the membrane. Involved in integration of membrane proteins that insert both dependently and independently of the Sec translocase complex, as well as at least some lipoproteins. Aids folding of multispanning membrane proteins. This is Membrane protein insertase YidC from Xanthomonas campestris pv. campestris (strain ATCC 33913 / DSM 3586 / NCPPB 528 / LMG 568 / P 25).